A 184-amino-acid polypeptide reads, in one-letter code: Photosystem I assembly protein Ycf4 (184 aa).

The next 2 helical transmembrane spans lie at 22–42 (FCWA…GTSS) and 57–77 (IVFF…LFIS).

This sequence belongs to the Ycf4 family.

Its subcellular location is the plastid. The protein localises to the chloroplast thylakoid membrane. In terms of biological role, seems to be required for the assembly of the photosystem I complex. In Lactuca sativa (Garden lettuce), this protein is Photosystem I assembly protein Ycf4.